We begin with the raw amino-acid sequence, 454 residues long: Ribosomal protein uS12 methylthiotransferase RimO (454 aa).

Residues 19–129 (AKVGFVSLGC…VLAQVHEHVA (111 aa)) enclose the MTTase N-terminal domain. [4Fe-4S] cluster-binding residues include C28, C64, C93, C161, C165, and C168. One can recognise a Radical SAM core domain in the interval 147-384 (LTPKHYAYLK…MAVQAKISSD (238 aa)). One can recognise a TRAM domain in the interval 387-453 (QVRIGQEYLI…EHDVWGVRVE (67 aa)).

This sequence belongs to the methylthiotransferase family. RimO subfamily. It depends on [4Fe-4S] cluster as a cofactor.

The protein resides in the cytoplasm. It catalyses the reaction L-aspartate(89)-[ribosomal protein uS12]-hydrogen + (sulfur carrier)-SH + AH2 + 2 S-adenosyl-L-methionine = 3-methylsulfanyl-L-aspartate(89)-[ribosomal protein uS12]-hydrogen + (sulfur carrier)-H + 5'-deoxyadenosine + L-methionine + A + S-adenosyl-L-homocysteine + 2 H(+). Catalyzes the methylthiolation of an aspartic acid residue of ribosomal protein uS12. In Colwellia psychrerythraea (strain 34H / ATCC BAA-681) (Vibrio psychroerythus), this protein is Ribosomal protein uS12 methylthiotransferase RimO.